Consider the following 170-residue polypeptide: MVSVFSSLRQSFKGLLVLVPVLIGLAFISPAEAVQWDAETLTVPVNPDGAEVTFTDREINAGRKVFNTSCGTCHAGGITKTNQNVGLDPETLALATPARDNVDALVDYMKDPTSYDGEYSISDVHPSMRSAELYPAMRDLDDEDLRLMAGYILVSPKVQGSSWGGGKIYF.

The signal sequence occupies residues 1 to 33 (MVSVFSSLRQSFKGLLVLVPVLIGLAFISPAEA). Heme c is bound by residues Cys70, Cys73, His74, and Met137.

Belongs to the cytochrome c family. PsbV subfamily. In terms of assembly, PSII is composed of 1 copy each of membrane proteins PsbA, PsbB, PsbC, PsbD, PsbE, PsbF, PsbH, PsbI, PsbJ, PsbK, PsbL, PsbM, PsbT, PsbX, PsbY, PsbZ, Psb30/Ycf12, peripheral proteins PsbO, CyanoQ (PsbQ), PsbU, PsbV and a large number of cofactors. It forms dimeric complexes. Requires heme c as cofactor.

The protein resides in the cellular thylakoid membrane. Its function is as follows. One of the extrinsic, lumenal subunits of photosystem II (PSII). PSII is a light-driven water plastoquinone oxidoreductase, using light energy to abstract electrons from H(2)O, generating a proton gradient subsequently used for ATP formation. The extrinsic proteins stabilize the structure of photosystem II oxygen-evolving complex (OEC), the ion environment of oxygen evolution and protect the OEC against heat-induced inactivation. Low-potential cytochrome c that plays a role in the OEC of PSII. The chain is Photosystem II extrinsic protein V from Synechococcus sp. (strain CC9902).